The chain runs to 211 residues: MRLSVIDHPLVAHKLTALRDARTDSPTFRRLADELVTLLAYEATRDVAVEPHPVTTPVTATTGVRLTSPKPIVVPILRAGLGMLDGMVRLLPTAEVGFLGMIRDETTLQATTYANRLPDDLSGRQVFVLDPMLATGGTLVAAITYLLERGARDVTALCLLAAPEGLEVVRTAFDDHAQVTVVTAAVDERLDENGYIVPGLGDAGDRLYGVV.

Residues arginine 78, arginine 103, and 130–138 (DPMLATGGT) each bind 5-phospho-alpha-D-ribose 1-diphosphate. Residues isoleucine 196 and 201 to 203 (GDA) contribute to the uracil site. Aspartate 202 is a 5-phospho-alpha-D-ribose 1-diphosphate binding site.

It belongs to the UPRTase family. Requires Mg(2+) as cofactor.

It carries out the reaction UMP + diphosphate = 5-phospho-alpha-D-ribose 1-diphosphate + uracil. It participates in pyrimidine metabolism; UMP biosynthesis via salvage pathway; UMP from uracil: step 1/1. With respect to regulation, allosterically activated by GTP. Its function is as follows. Catalyzes the conversion of uracil and 5-phospho-alpha-D-ribose 1-diphosphate (PRPP) to UMP and diphosphate. This is Uracil phosphoribosyltransferase from Kineococcus radiotolerans (strain ATCC BAA-149 / DSM 14245 / SRS30216).